Consider the following 85-residue polypeptide: MAHKKAGGSTRNGRDSESKRLGVKLFGGQAVKAGNILVRQRGTKFHAGYGVGLGKDHTLFAKVDGVVKFETKGAFGRKYVSIVAA.

The protein belongs to the bacterial ribosomal protein bL27 family.

This is Large ribosomal subunit protein bL27 from Pseudomonas aeruginosa (strain LESB58).